Reading from the N-terminus, the 868-residue chain is Alanine--tRNA ligase (868 aa).

The Zn(2+) site is built by histidine 556, histidine 560, cysteine 666, and histidine 670.

Belongs to the class-II aminoacyl-tRNA synthetase family. Zn(2+) is required as a cofactor.

The protein localises to the cytoplasm. It catalyses the reaction tRNA(Ala) + L-alanine + ATP = L-alanyl-tRNA(Ala) + AMP + diphosphate. In terms of biological role, catalyzes the attachment of alanine to tRNA(Ala) in a two-step reaction: alanine is first activated by ATP to form Ala-AMP and then transferred to the acceptor end of tRNA(Ala). Also edits incorrectly charged Ser-tRNA(Ala) and Gly-tRNA(Ala) via its editing domain. The protein is Alanine--tRNA ligase of Elusimicrobium minutum (strain Pei191).